A 700-amino-acid polypeptide reads, in one-letter code: Elongation factor G (700 aa).

The tr-type G domain maps to 8 to 290 (ERYRNIGISA…AVIDYLPAPT (283 aa)). GTP is bound by residues 17 to 24 (AHIDAGKT), 88 to 92 (DTPGH), and 142 to 145 (NKMD).

It belongs to the TRAFAC class translation factor GTPase superfamily. Classic translation factor GTPase family. EF-G/EF-2 subfamily.

Its subcellular location is the cytoplasm. Its function is as follows. Catalyzes the GTP-dependent ribosomal translocation step during translation elongation. During this step, the ribosome changes from the pre-translocational (PRE) to the post-translocational (POST) state as the newly formed A-site-bound peptidyl-tRNA and P-site-bound deacylated tRNA move to the P and E sites, respectively. Catalyzes the coordinated movement of the two tRNA molecules, the mRNA and conformational changes in the ribosome. The polypeptide is Elongation factor G (Glaesserella parasuis serovar 5 (strain SH0165) (Haemophilus parasuis)).